The sequence spans 427 residues: Adenylosuccinate synthetase (427 aa).

Residues 12–18 and 40–42 contribute to the GTP site; these read GDEGKGK and GHT. Asp-13 functions as the Proton acceptor in the catalytic mechanism. Asp-13 and Gly-40 together coordinate Mg(2+). IMP is bound by residues 13–16, 38–41, Thr-128, Arg-142, Gln-223, Thr-238, and Arg-302; these read DEGK and NAGH. His-41 (proton donor) is an active-site residue. 298 to 304 is a binding site for substrate; it reads TTTGRAR. GTP contacts are provided by residues Arg-304, 330-332, and 412-414; these read KLD and AVG.

This sequence belongs to the adenylosuccinate synthetase family. In terms of assembly, homodimer. Mg(2+) serves as cofactor.

It is found in the cytoplasm. The catalysed reaction is IMP + L-aspartate + GTP = N(6)-(1,2-dicarboxyethyl)-AMP + GDP + phosphate + 2 H(+). The protein operates within purine metabolism; AMP biosynthesis via de novo pathway; AMP from IMP: step 1/2. Plays an important role in the de novo pathway of purine nucleotide biosynthesis. Catalyzes the first committed step in the biosynthesis of AMP from IMP. The polypeptide is Adenylosuccinate synthetase (Desulfitobacterium hafniense (strain Y51)).